The sequence spans 507 residues: Serine/threonine-protein kinase BSK11 (507 aa).

A lipid anchor (N-myristoyl glycine) is attached at G2. Residues 16 to 26 (DKKITSDDLSG) are compositionally biased toward basic and acidic residues. Positions 16-44 (DKKITSDDLSGRRGKGAKRGNRHRHANIN) are disordered. A compositionally biased stretch (basic residues) spans 27 to 41 (RRGKGAKRGNRHRHA). Positions 75-332 (NAVVSVCSDQ…GDIISVITTL (258 aa)) constitute a Protein kinase domain. Residues 81–89 (CSDQEPNLV) and K106 contribute to the ATP site. Catalysis depends on D200, which acts as the Proton acceptor.

It belongs to the protein kinase superfamily. Ser/Thr protein kinase family. Interacts with BRI1, ASK7/BIN2, BSK1, BSK6 and BSK8. In terms of processing, phosphorylated by BRI1, ASK7/BIN2 and ASK9/BIL2.

Its subcellular location is the cell membrane. The enzyme catalyses L-seryl-[protein] + ATP = O-phospho-L-seryl-[protein] + ADP + H(+). It catalyses the reaction L-threonyl-[protein] + ATP = O-phospho-L-threonyl-[protein] + ADP + H(+). Probable serine/threonine kinase that acts as a positive regulator of brassinosteroid (BR) signaling downstream of the receptor kinase BRI1. This Arabidopsis thaliana (Mouse-ear cress) protein is Serine/threonine-protein kinase BSK11.